The primary structure comprises 122 residues: N(2)-fixation sustaining protein CowN (122 aa).

The protein belongs to the CowN family.

In terms of biological role, is required to sustain N(2)-dependent growth in the presence of low levels of carbon monoxide (CO). Probably acts by protecting the N(2) fixation ability of the nitrogenase complex, which is inactivated in the presence of CO. The chain is N(2)-fixation sustaining protein CowN from Azorhizobium caulinodans (strain ATCC 43989 / DSM 5975 / JCM 20966 / LMG 6465 / NBRC 14845 / NCIMB 13405 / ORS 571).